Consider the following 229-residue polypeptide: Heptaprenylglyceryl phosphate synthase (229 aa).

K12 is a sn-glycerol 1-phosphate binding site. The Mg(2+) site is built by D14 and S40. Residues 159 to 164 (YLEYSG), G189, and 209 to 210 (GN) each bind sn-glycerol 1-phosphate.

The protein belongs to the GGGP/HepGP synthase family. Group I subfamily. As to quaternary structure, homodimer. Mg(2+) serves as cofactor.

It catalyses the reaction sn-glycerol 1-phosphate + all-trans-heptaprenyl diphosphate = 3-heptaprenyl-sn-glycero-1-phosphate + diphosphate. It participates in membrane lipid metabolism; glycerophospholipid metabolism. Its function is as follows. Prenyltransferase that catalyzes in vivo the transfer of the heptaprenyl moiety of heptaprenyl pyrophosphate (HepPP; 35 carbon atoms) to the C3 hydroxyl of sn-glycerol-1-phosphate (G1P), producing heptaprenylglyceryl phosphate (HepGP). This reaction is an ether-bond-formation step in the biosynthesis of archaea-type G1P-based membrane lipids found in Bacillales. The protein is Heptaprenylglyceryl phosphate synthase of Bacillus mycoides (strain KBAB4) (Bacillus weihenstephanensis).